Reading from the N-terminus, the 224-residue chain is Large ribosomal subunit protein uL11c (224 aa).

A chloroplast-targeting transit peptide spans 1 to 66 (MAQPLVAAPS…SHRRLSIVAM (66 aa)). 2 positions are modified to N6,N6,N6-trimethyllysine: Lys75 and Lys111.

In terms of assembly, component of the chloroplast large ribosomal subunit (LSU). Mature 70S chloroplast ribosomes of higher plants consist of a small (30S) and a large (50S) subunit. The 30S small subunit contains 1 molecule of ribosomal RNA (16S rRNA) and 24 different proteins. The 50S large subunit contains 3 rRNA molecules (23S, 5S and 4.5S rRNA) and 33 different proteins.

It is found in the plastid. The protein localises to the chloroplast. In terms of biological role, component of the chloroplast ribosome (chloro-ribosome), a dedicated translation machinery responsible for the synthesis of chloroplast genome-encoded proteins, including proteins of the transcription and translation machinery and components of the photosynthetic apparatus. This is Large ribosomal subunit protein uL11c (rpl11) from Spinacia oleracea (Spinach).